A 347-amino-acid polypeptide reads, in one-letter code: Hydroxymethylglutaryl-CoA synthase (347 aa).

(3S)-3-hydroxy-3-methylglutaryl-CoA contacts are provided by Asp-29 and Ala-30. Residue Glu-80 is the Proton donor/acceptor of the active site. Residues Cys-112 and Thr-153 each coordinate (3S)-3-hydroxy-3-methylglutaryl-CoA. The active-site Acyl-thioester intermediate is the Cys-112. Position 199 (Arg-199) interacts with CoA. (3S)-3-hydroxy-3-methylglutaryl-CoA-binding residues include Thr-201 and His-234. Residue His-234 is the Proton donor/acceptor of the active site. Lys-239 lines the CoA pocket. Positions 243, 266, and 296 each coordinate (3S)-3-hydroxy-3-methylglutaryl-CoA.

Belongs to the thiolase-like superfamily. Archaeal HMG-CoA synthase family. In terms of assembly, interacts with acetoacetyl-CoA thiolase that catalyzes the precedent step in the pathway and with a DUF35 protein. The acetoacetyl-CoA thiolase/HMG-CoA synthase complex channels the intermediate via a fused CoA-binding site, which allows for efficient coupling of the endergonic thiolase reaction with the exergonic HMGCS reaction.

It catalyses the reaction acetoacetyl-CoA + acetyl-CoA + H2O = (3S)-3-hydroxy-3-methylglutaryl-CoA + CoA + H(+). Its pathway is metabolic intermediate biosynthesis; (R)-mevalonate biosynthesis; (R)-mevalonate from acetyl-CoA: step 2/3. Functionally, catalyzes the condensation of acetyl-CoA with acetoacetyl-CoA to form 3-hydroxy-3-methylglutaryl-CoA (HMG-CoA). Functions in the mevalonate (MVA) pathway leading to isopentenyl diphosphate (IPP), a key precursor for the biosynthesis of isoprenoid compounds that are building blocks of archaeal membrane lipids. The polypeptide is Hydroxymethylglutaryl-CoA synthase (Methanocella arvoryzae (strain DSM 22066 / NBRC 105507 / MRE50)).